The primary structure comprises 1474 residues: Alpha-2-macroglobulin (1474 aa).

The first 23 residues, 1-23 (MGKNKLLHPSLVLLLLVLLPTDA), serve as a signal peptide directing secretion. C48 and C86 are joined by a disulfide. N-linked (GlcNAc...) (complex) asparagine glycosylation occurs at N55. N-linked (GlcNAc...) asparagine glycosylation is found at N70 and N247. Disulfide bonds link C251–C299 and C269–C287. N-linked (GlcNAc...) asparagine glycans are attached at residues N396 and N410. Disulfide bonds link C470-C563, C595-C771, C642-C689, C821-C849, C847-C883, C921-C1321, C1079-C1127, and C1352-C1467. Residues 690–728 (PQLQQYEMHGPEGLRVGFYESDVMGRGHARLVHVEEPHT) form a bait region region. Isoglutamyl lysine isopeptide (Gln-Lys) (interchain with K-? in other proteins) cross-links involve residues Q693 and Q694. 3 inhibitory regions span residues 704–709 (RVGFYE), 719–723 (RLVHV), and 730–735 (TVRKYF). N869 is a glycosylation site (N-linked (GlcNAc...) asparagine). Residues 972 to 975 (CGEQ) constitute a cross-link (isoglutamyl cysteine thioester (Cys-Gln)). Residue N991 is glycosylated (N-linked (GlcNAc...) asparagine). N-linked (GlcNAc...) (complex) asparagine glycosylation is present at N1424.

It belongs to the protease inhibitor I39 (alpha-2-macroglobulin) family. Homotetramer; disulfide-linked. As to expression, secreted in plasma.

It localises to the secreted. Is able to inhibit all four classes of proteinases by a unique 'trapping' mechanism. This protein has a peptide stretch, called the 'bait region' which contains specific cleavage sites for different proteinases. When a proteinase cleaves the bait region, a conformational change is induced in the protein which traps the proteinase. The entrapped enzyme remains active against low molecular weight substrates (activity against high molecular weight substrates is greatly reduced). Following cleavage in the bait region, a thioester bond is hydrolyzed and mediates the covalent binding of the protein to the proteinase. This Homo sapiens (Human) protein is Alpha-2-macroglobulin (A2M).